Consider the following 467-residue polypeptide: tRNA-2-methylthio-N(6)-dimethylallyladenosine synthase (467 aa).

In terms of domain architecture, MTTase N-terminal spans Arg5–Arg125. [4Fe-4S] cluster is bound by residues Cys14, Cys50, Cys88, Cys166, Cys170, and Cys173. Positions Arg152–Ala384 constitute a Radical SAM core domain. Residues Lys387–Ala449 enclose the TRAM domain.

It belongs to the methylthiotransferase family. MiaB subfamily. As to quaternary structure, monomer. It depends on [4Fe-4S] cluster as a cofactor.

The protein localises to the cytoplasm. The catalysed reaction is N(6)-dimethylallyladenosine(37) in tRNA + (sulfur carrier)-SH + AH2 + 2 S-adenosyl-L-methionine = 2-methylsulfanyl-N(6)-dimethylallyladenosine(37) in tRNA + (sulfur carrier)-H + 5'-deoxyadenosine + L-methionine + A + S-adenosyl-L-homocysteine + 2 H(+). Its function is as follows. Catalyzes the methylthiolation of N6-(dimethylallyl)adenosine (i(6)A), leading to the formation of 2-methylthio-N6-(dimethylallyl)adenosine (ms(2)i(6)A) at position 37 in tRNAs that read codons beginning with uridine. The polypeptide is tRNA-2-methylthio-N(6)-dimethylallyladenosine synthase (Bradyrhizobium sp. (strain ORS 278)).